A 481-amino-acid chain; its full sequence is Probable Xaa-Pro aminopeptidase PEPP (481 aa).

Mn(2+)-binding residues include Asp265, Asp276, Glu399, and Glu439.

This sequence belongs to the peptidase M24B family. Requires Mn(2+) as cofactor.

The enzyme catalyses Release of any N-terminal amino acid, including proline, that is linked to proline, even from a dipeptide or tripeptide.. Functionally, catalyzes the removal of a penultimate prolyl residue from the N-termini of peptides. The sequence is that of Probable Xaa-Pro aminopeptidase PEPP (PEPP) from Uncinocarpus reesii (strain UAMH 1704).